The primary structure comprises 253 residues: uncharacterized protein (253 aa).

Positions 211–241 (TTRRKRYREDRDSGEDLGAESKRGNGSVRYT) are disordered.

This is an uncharacterized protein from Ictalurid herpesvirus 1 (strain Auburn) (IcHV-1).